We begin with the raw amino-acid sequence, 250 residues long: ATP synthase subunit a (250 aa).

The next 6 helical transmembrane spans lie at 29 to 49 (ASLFMAASAAIAAGFLYFATS), 84 to 104 (FFPLVFSLFMFVLTANLLGMF), 114 to 134 (IIVTAALAILVIGTVVVYGFY), 143 to 163 (VFVPSGVPGILLPLVVTIEII), 193 to 213 (FVASLGALGAVGVGGAVLPLI), and 216 to 236 (VALTGLEFLVAFLQAYVFAVL).

Belongs to the ATPase A chain family. In terms of assembly, F-type ATPases have 2 components, CF(1) - the catalytic core - and CF(0) - the membrane proton channel. CF(1) has five subunits: alpha(3), beta(3), gamma(1), delta(1), epsilon(1). CF(0) has three main subunits: a(1), b(2) and c(9-12). The alpha and beta chains form an alternating ring which encloses part of the gamma chain. CF(1) is attached to CF(0) by a central stalk formed by the gamma and epsilon chains, while a peripheral stalk is formed by the delta and b chains.

Its subcellular location is the cell inner membrane. In terms of biological role, key component of the proton channel; it plays a direct role in the translocation of protons across the membrane. This is ATP synthase subunit a from Rhizobium johnstonii (strain DSM 114642 / LMG 32736 / 3841) (Rhizobium leguminosarum bv. viciae).